We begin with the raw amino-acid sequence, 224 residues long: Proteasome subunit beta (224 aa).

Residues 1-6 constitute a propeptide, removed in mature form; by autocatalysis; it reads MDVMKG. Thr-7 serves as the catalytic Nucleophile.

Belongs to the peptidase T1B family. The 20S proteasome core is composed of 14 alpha and 14 beta subunits that assemble into four stacked heptameric rings, resulting in a barrel-shaped structure. The two inner rings, each composed of seven catalytic beta subunits, are sandwiched by two outer rings, each composed of seven alpha subunits. The catalytic chamber with the active sites is on the inside of the barrel. Has a gated structure, the ends of the cylinder being occluded by the N-termini of the alpha-subunits. Is capped at one or both ends by the proteasome regulatory ATPase, PAN.

The protein resides in the cytoplasm. It carries out the reaction Cleavage of peptide bonds with very broad specificity.. With respect to regulation, the formation of the proteasomal ATPase PAN-20S proteasome complex, via the docking of the C-termini of PAN into the intersubunit pockets in the alpha-rings, triggers opening of the gate for substrate entry. Interconversion between the open-gate and close-gate conformations leads to a dynamic regulation of the 20S proteasome proteolysis activity. In terms of biological role, component of the proteasome core, a large protease complex with broad specificity involved in protein degradation. The chain is Proteasome subunit beta from Methanocaldococcus sp. (strain FS406-22).